The primary structure comprises 1368 residues: DNA-directed RNA polymerase subunit beta (1368 aa).

Belongs to the RNA polymerase beta chain family. As to quaternary structure, the RNAP catalytic core consists of 2 alpha, 1 beta, 1 beta' and 1 omega subunit. When a sigma factor is associated with the core the holoenzyme is formed, which can initiate transcription.

The enzyme catalyses RNA(n) + a ribonucleoside 5'-triphosphate = RNA(n+1) + diphosphate. Functionally, DNA-dependent RNA polymerase catalyzes the transcription of DNA into RNA using the four ribonucleoside triphosphates as substrates. This Legionella pneumophila (strain Paris) protein is DNA-directed RNA polymerase subunit beta.